The following is a 517-amino-acid chain: Acetylcholine receptor subunit gamma (517 aa).

A signal peptide spans 1 to 22 (MHGGQGPLLLLLLLAVCLGAQG). Topologically, residues 23–240 (RNQEERLLAD…VVFYLLIQRK (218 aa)) are extracellular. 2 N-linked (GlcNAc...) asparagine glycosylation sites follow: Asn52 and Asn163. Cys150 and Cys164 are oxidised to a cystine. A run of 3 helical transmembrane segments spans residues 241-265 (PLFY…IHFL), 275-293 (TVAI…LVAK), and 309-330 (LTFL…LNVS). Over 331–474 (LRSPHTHSMA…WFLVGRVLDR (144 aa)) the chain is Cytoplasmic. A helical membrane pass occupies residues 475–495 (VCFLAMLSLFICGTAGIFLMA).

This sequence belongs to the ligand-gated ion channel (TC 1.A.9) family. Acetylcholine receptor (TC 1.A.9.1) subfamily. Gamma/CHRNG sub-subfamily. As to quaternary structure, pentamer of two alpha chains, and one each of the beta, delta, and gamma (in immature muscle) or epsilon (in mature muscle) chains.

Its subcellular location is the postsynaptic cell membrane. It is found in the cell membrane. It catalyses the reaction K(+)(in) = K(+)(out). The enzyme catalyses Na(+)(in) = Na(+)(out). After binding acetylcholine, the AChR responds by an extensive change in conformation that affects all subunits and leads to opening of an ion-conducting channel across the plasma membrane. The chain is Acetylcholine receptor subunit gamma from Homo sapiens (Human).